Consider the following 703-residue polypeptide: Solute carrier family 28 member 3 (703 aa).

The segment covering 1–19 has biased composition (basic and acidic residues); it reads MSRADPGKNSEPSESKMSL. The tract at residues 1–93 is disordered; the sequence is MSRADPGKNS…DPEDDSEDEH (93 aa). Over 1-117 the chain is Cytoplasmic; the sequence is MSRADPGKNS…FCRKHRVVLR (117 aa). Over residues 44–61 the composition is skewed to polar residues; it reads QNTPGNSTVRNRVVQSGE. Basic and acidic residues predominate over residues 63–72; sequence GHAKQDDRQI. The chain crosses the membrane as a helical span at residues 118-138; sequence STIWAVLLTGFLALVIAACAI. Residues 139 to 143 are Extracellular-facing; the sequence is NFHRA. Residues 144–164 form a helical membrane-spanning segment; that stretch reads LPLFVITLVTIFFVIWDHLMA. The Cytoplasmic segment spans residues 165–188; sequence KYEQRIDDFLSPGRRLLDRHWFWL. Residues 189-209 traverse the membrane as a helical segment; it reads KWVVWSSLILAIILWLSLDTA. Topologically, residues 210–212 are extracellular; it reads KLG. The helical transmembrane segment at 213–234 threads the bilayer; it reads QQNLVSFGGLIMYLILLFLFSK. Residues 235 to 242 are Cytoplasmic-facing; the sequence is HPTRVYWR. A helical membrane pass occupies residues 243-262; that stretch reads PVFWGIGLQFLLGLLILRTR. Residues 263–299 lie on the Extracellular side of the membrane; it reads PGFVAFDWMGRQVQTFLGYTDTGARFVFGEKYTDHFF. A helical membrane pass occupies residues 300–320; that stretch reads AFKILPIVVFFSTVMSMLYYL. Residues 321–344 are Cytoplasmic-facing; that stretch reads GLMQWIIRKVGWLMLVTMGSSPIE. The segment at residues 345 to 363 is an intramembrane region (helical); the sequence is SVVAAGNIFIGQTESPLLV. Over 364 to 376 the chain is Cytoplasmic; the sequence is QPYLPHVTKSELH. Residues 377-399 form a helical membrane-spanning segment; sequence TIMTAGFATIAGSVLGAYISFGV. The Extracellular portion of the chain corresponds to 400–401; it reads SS. The helical transmembrane segment at 402-423 threads the bilayer; sequence THLLTASVMSAPAALAVAKLFW. The Cytoplasmic portion of the chain corresponds to 424–458; it reads PETEKPKITLKSAMKMENGDSRNLLEAASQGASSS. The chain crosses the membrane as a helical span at residues 459 to 484; that stretch reads IPLVANIAANLIAFLALLSFVNSALS. At 485-522 the chain is on the extracellular side; sequence WFGSMFNYPELSFELICSYIFMPFSFMMGVDWQDSFMV. An intramembrane region (helical) is located at residues 523 to 542; sequence AKLIGYKTFFNEFVAYDHLS. Over 543 to 581 the chain is Extracellular; sequence KLINLRKAAGPKFVNGVQQYMSIRSETIATYALCGFANF. A helical transmembrane segment spans residues 582–592; the sequence is GSLGIVIGGLT. The Cytoplasmic segment spans residues 593-605; it reads SIAPSRKRDIASG. A helical membrane pass occupies residues 606 to 628; sequence AMRALIAGTIACFMTACIAGILS. Topologically, residues 629–703 are extracellular; that stretch reads DTPVDINCHH…LNCNWIPNKL (75 aa).

This sequence belongs to the concentrative nucleoside transporter (CNT) (TC 2.A.41) family. In terms of assembly, homotrimer.

The protein localises to the cell membrane. The catalysed reaction is thymidine(out) + 2 Na(+)(out) = thymidine(in) + 2 Na(+)(in). It carries out the reaction cytidine(out) + 2 Na(+)(out) = cytidine(in) + 2 Na(+)(in). The enzyme catalyses uridine(out) + 2 Na(+)(out) = uridine(in) + 2 Na(+)(in). It catalyses the reaction adenosine(out) + 2 Na(+)(out) = adenosine(in) + 2 Na(+)(in). The catalysed reaction is guanosine(out) + 2 Na(+)(out) = guanosine(in) + 2 Na(+)(in). It carries out the reaction inosine(out) + 2 Na(+)(out) = inosine(in) + 2 Na(+)(in). Functionally, sodium-dependent, pyrimidine- and purine-selective. Involved in the homeostasis of endogenous nucleosides. Exhibits the transport characteristics of the nucleoside transport system cib or N3 subtype (N3/cib) (with marked transport of both thymidine and inosine). Employs a 2:1 sodium/nucleoside ratio. Also able to transport gemcitabine, 3'-azido-3'-deoxythymidine (AZT), ribavirin and 3-deazauridine. In Mus musculus (Mouse), this protein is Solute carrier family 28 member 3 (Slc28a3).